Here is a 1265-residue protein sequence, read N- to C-terminus: MITGLSIHNQINKKNEPVKKEQNIQAFVRVRPFSVYELNQGVTTVPIRVSDSSKEVLCEYKGTTRQYKFDHVFDQDSIQSEVFNIAVKPICDEVLLGFNGTIFVYGQTGTGKTHTMEGKHGSNEDMGIIPRTINYLFQCLEQSGADYNIRASHLEIYKEEIFDLLACNGNENLNKPLGMFDTQKGFKIPELEEIVVNDRQSILNVLAKSCKRRQTAETQYNKQSSRSHCIFSITVHVKETSVGGEDLIKIGKLNLVDLAGSENAEKSGNNDRLREAALINKSLLTLGKVITDLTNNEKHIPYRSSQLTKILQDSLGGKTKTSIIATVSPSLVNLEETINTLEYALKAKNIKNTPQINQRMSKNSLLKEQSSEIAHLKQLLQAAYDKNGVYLTIDVYEQMKRELEEKCSQQSITEHKMEAQRHEISSMRKSFDEQTMLFEEAMNELESSKKQQQEKQKFIDQFISQDTMLRSNLGSAVQDLSKLHEKLDTMKSTERENQKSIIDSKSILSKRLTDLNQMLVSKLQMGQNELLESLSVQLKVVHDQQTKSNQLIGKRINNLSQLIDSSVLQIQQLNNDDKQQTQPLLKLNKESNDLFMKLDKTIQQLSDQIKIILSDFSLPFFNSNNNNSNNGDEIIDDSLINNCFKLINDHVNKSDLIVSQQNKLIQEFSESMSQWMLHQSQYIIEQRDYQKQLKEKQILNNTQWEKKLLSKLGQVIQQFSKNFTDSTSVYYDTMDNNLQHFEKQFNSINNHSRQQVESLSNNLQQSSTLSHQFESTVKSVLNDHHANNKKVDPKLIESIEKAKKRINQLTDGCIDLSQRQRQCTNQFNEAFTDFTFGIQSQKDILDRVIIEKNQVHEILPLIEKSKSTFKENIDTLIHSLDSRKSIIQSSTNECSNQLNSLISSIPSYLDSAIKVTSKSGETPSKKHFDIPSPISTSSSSSSSSSISSIHSNAGGKENNHQSINNSIKSNNFDGSKSINCDNMKIDTPQKSSTIPITPKSLKLNLNSTPKSVSKNLKSSQQQQPLIVPSSNQLTLSAKKLSNKEYQRLQQQQQQQQQEQQQQQSAKKKKLAIEKQLMITTSPTLSLVNESPFSSPKLSKQKILQDQIQPPQPPSILSQLNSTPISFLQPQQPQQQPPSFFNNLNGSFNRGNNSIDFSLLDDDSDSDNSDDDVRSLLSSNKKSSRASKNAVVSKKVGLTPSRKLKGVNSSANQSLNVKKSKPILTSLSKKQNISTPIIHSSKPSIFGGGSTISSKLKSLKQQTPLK.

One can recognise a Kinesin motor domain in the interval 23-350; it reads NIQAFVRVRP…LEYALKAKNI (328 aa). Residue 106-113 coordinates ATP; that stretch reads GQTGTGKT. Positions 331-459 form a coiled coil; that stretch reads LVNLEETINT…KQQQEKQKFI (129 aa). 5 disordered regions span residues 918–1026, 1085–1119, 1127–1146, 1158–1214, and 1245–1265; these read KSGE…QPLI, SLVN…LSQL, LQPQ…LNGS, LLDD…NQSL, and FGGG…TPLK. Residues 930 to 951 show a composition bias toward low complexity; that stretch reads IPSPISTSSSSSSSSSISSIHS. Polar residues-rich tracts occupy residues 960 to 980, 1003 to 1026, and 1085 to 1097; these read HQSI…SINC, LNLN…QPLI, and SLVN…SPKL. Composition is skewed to low complexity over residues 1100-1119 and 1128-1146; these read QKIL…LSQL and QPQQ…LNGS. A compositionally biased stretch (acidic residues) spans 1158-1169; it reads LLDDDSDSDNSD. Residues 1174-1195 are compositionally biased toward low complexity; sequence SLLSSNKKSSRASKNAVVSKKV. The span at 1250-1265 shows a compositional bias: polar residues; it reads TISSKLKSLKQQTPLK.

This sequence belongs to the TRAFAC class myosin-kinesin ATPase superfamily. Kinesin family. BimC subfamily.

Its subcellular location is the cytoplasm. It is found in the cytoskeleton. Microtubule-associated force-producing protein that plays a role in organelle transport. Its motor activity is directed toward the microtubule's plus end. Cooperates with dynein to control the spindle elongation rate, but is dispensable for mitosis. This Dictyostelium discoideum (Social amoeba) protein is Kinesin-related protein 13 (kif13).